A 265-amino-acid chain; its full sequence is Zwei Ig domain protein zig-1 (265 aa).

The first 17 residues, 1 to 17, serve as a signal peptide directing secretion; the sequence is MKNLLLITFFVVSTVTA. The Extracellular portion of the chain corresponds to 18-232; the sequence is LGGRGSKSAL…KMVDVRSEFQ (215 aa). 2 Ig-like C2-type domains span residues 41 to 108 and 120 to 220; these read HATD…TPHG and PVVH…MLLV. Asn83 and Asn193 each carry an N-linked (GlcNAc...) asparagine glycan. Cys155 and Cys202 are joined by a disulfide. The chain crosses the membrane as a helical span at residues 233–253; that stretch reads WVYPLAVILITIFLLVVIIVF. Residues 254 to 265 are Cytoplasmic-facing; that stretch reads CEWRNKKSTSKA.

In terms of tissue distribution, expressed in neurons and body wall muscles.

The protein resides in the cell membrane. Probably not involved in maintaining the position of ASI and ASH head neuron cell bodies and ventral nerve cord axons of PVQ, PVP, RMEV, AVK and HSN neurons. The chain is Zwei Ig domain protein zig-1 from Caenorhabditis elegans.